The primary structure comprises 361 residues: tRNA-specific 2-thiouridylase MnmA (361 aa).

ATP contacts are provided by residues 8–15 and M34; that span reads GMSGGVDS. The segment at 94-96 is interaction with target base in tRNA; it reads NPD. C99 (nucleophile) is an active-site residue. C99 and C195 are joined by a disulfide. An ATP-binding site is contributed by G123. Residues 145–147 form an interaction with tRNA region; sequence KDQ. The active-site Cysteine persulfide intermediate is the C195. The interaction with tRNA stretch occupies residues 307 to 308; the sequence is RY.

Belongs to the MnmA/TRMU family.

The protein resides in the cytoplasm. The catalysed reaction is S-sulfanyl-L-cysteinyl-[protein] + uridine(34) in tRNA + AH2 + ATP = 2-thiouridine(34) in tRNA + L-cysteinyl-[protein] + A + AMP + diphosphate + H(+). In terms of biological role, catalyzes the 2-thiolation of uridine at the wobble position (U34) of tRNA, leading to the formation of s(2)U34. The sequence is that of tRNA-specific 2-thiouridylase MnmA from Legionella pneumophila subsp. pneumophila (strain Philadelphia 1 / ATCC 33152 / DSM 7513).